The primary structure comprises 256 residues: Major prion protein (256 aa).

The signal sequence occupies residues 1–24; sequence MVKSHIGSWILVLFVAMWSDVGLC. Residues 25–233 form an interaction with GRB2, ERI3 and SYN1 region; sequence KKRPKPGGGW…ESQAYYQRGA (209 aa). The interval 28-110 is disordered; it reads PKPGGGWNTG…QWNKPSKPKT (83 aa). A run of 5 repeats spans residues 54-62, 63-70, 71-78, 79-86, and 87-95. Residues 54–95 form a 5 X 8 AA tandem repeats of P-H-G-G-G-W-G-Q region; that stretch reads PQGGGGWGQPHGGGWGQPHGGGWGQPHGGGWGQPHGGGGWGQ. Positions 55–97 are enriched in gly residues; sequence QGGGGWGQPHGGGWGQPHGGGWGQPHGGGWGQPHGGGGWGQGG. Residues His-64, Gly-65, Gly-66, His-72, Gly-73, Gly-74, His-80, Gly-81, Gly-82, His-88, Gly-90, and Gly-91 each coordinate Cu(2+). A disulfide bridge connects residues Cys-182 and Cys-217. Asn-184 and Asn-200 each carry an N-linked (GlcNAc...) asparagine glycan. Residue Ala-233 is the site of GPI-anchor amidated alanine attachment. Residues 234-256 constitute a propeptide, removed in mature form; the sequence is SVILFSSPPVILLISFLIFLIVG.

Belongs to the prion family. In terms of assembly, monomer and homodimer. Has a tendency to aggregate into amyloid fibrils containing a cross-beta spine, formed by a steric zipper of superposed beta-strands. Soluble oligomers may represent an intermediate stage on the path to fibril formation. Copper binding may promote oligomerization. Interacts with GRB2, APP, ERI3/PRNPIP and SYN1. Mislocalized cytosolically exposed PrP interacts with MGRN1; this interaction alters MGRN1 subcellular location and causes lysosomal enlargement. Interacts with KIAA1191.

The protein resides in the cell membrane. The protein localises to the golgi apparatus. In terms of biological role, its primary physiological function is unclear. Has cytoprotective activity against internal or environmental stresses. May play a role in neuronal development and synaptic plasticity. May be required for neuronal myelin sheath maintenance. May play a role in iron uptake and iron homeostasis. Soluble oligomers are toxic to cultured neuroblastoma cells and induce apoptosis (in vitro). Association with GPC1 (via its heparan sulfate chains) targets PRNP to lipid rafts. Also provides Cu(2+) or Zn(2+) for the ascorbate-mediated GPC1 deaminase degradation of its heparan sulfate side chains. The polypeptide is Major prion protein (PRNP) (Odocoileus hemionus (Mule deer)).